A 112-amino-acid polypeptide reads, in one-letter code: cAMP-regulated phosphoprotein 19 (112 aa).

At methionine 1 the chain carries N-acetylmethionine. The span at 1–11 (MSAEVPEAASA) shows a compositional bias: low complexity. The segment at 1–49 (MSAEVPEAASAEEQKEMEDKVTSPEKAEEAKLKARYPHLGQKPGGSDFL) is disordered. Serine 2 is modified (N-acetylserine). Phosphoserine occurs at positions 2 and 23. Residues 12-32 (EEQKEMEDKVTSPEKAEEAKL) show a composition bias toward basic and acidic residues. Phosphoserine; by GWL occurs at positions 62 and 104. A disordered region spans residues 73–112 (KNKQLPTAAPDKTEVTGDHIPTPQDLPQRKPSLVASKLAG). Serine 104 carries the post-translational modification Phosphoserine; by PKA. Lysine 109 carries the N6-acetyllysine modification.

Belongs to the endosulfine family. As to quaternary structure, interacts (when phosphorylated at Ser-62) with PPP2R2D. Interacts with SNCA. Interacts with PPP2R2A; the interaction is direct and this interaction inhibits PP2A activity. In terms of processing, phosphorylation at Ser-62 by MASTL/GWL during mitosis is essential for interaction with PPP2R2D (PR55-delta) and subsequent inactivation of PP2A. Phosphorylated by PKA.

Its subcellular location is the cytoplasm. Protein phosphatase inhibitor that specifically inhibits protein phosphatase 2A (PP2A) during mitosis. Inhibition of PP2A is enhanced when ARPP19 is phosphorylated. When phosphorylated at Ser-62 during mitosis, specifically interacts with PPP2R2D (PR55-delta) and inhibits its activity, leading to inactivation of PP2A, an essential condition to keep cyclin-B1-CDK1 activity high during M phase. May indirectly enhance GAP-43 expression. The chain is cAMP-regulated phosphoprotein 19 (ARPP19) from Homo sapiens (Human).